Consider the following 541-residue polypeptide: Zinc finger CCHC domain-containing protein 7 (541 aa).

The interval 111–144 (AEEKTQSPATSHSNKVAQKCKRNNKKPKPEERPG) is disordered. The span at 116–126 (QSPATSHSNKV) shows a compositional bias: polar residues. Residues Lys129, Lys136, Lys138, Lys234, and Lys249 each participate in a glycyl lysine isopeptide (Lys-Gly) (interchain with G-Cter in SUMO2) cross-link. CCHC-type zinc fingers lie at residues 236-253 (VTCR…NCPL), 258-275 (RACC…GCPA), and 299-316 (KRCD…ACPE). Residue Lys334 forms a Glycyl lysine isopeptide (Lys-Gly) (interchain with G-Cter in SUMO2) linkage. A CCHC-type 4 zinc finger spans residues 343–360 (VYCYNCAQKGHYGHECTE). The disordered stretch occupies residues 394 to 541 (VKDLKKNGDF…KKKKPKPSGL (148 aa)). Residues Lys408 and Lys431 each participate in a glycyl lysine isopeptide (Lys-Gly) (interchain with G-Cter in SUMO2) cross-link. Positions 418–434 (RRHHDMRKSRSPRKYRR) are enriched in basic residues. Basic and acidic residues predominate over residues 435 to 452 (WPRENKETQKEKTRSREG). Lys473 is covalently cross-linked (Glycyl lysine isopeptide (Lys-Gly) (interchain with G-Cter in SUMO2)). Positions 474–486 (PNASGCANNQKPS) are enriched in polar residues. The residue at position 477 (Ser477) is a Phosphoserine. Glycyl lysine isopeptide (Lys-Gly) (interchain with G-Cter in SUMO2) cross-links involve residues Lys484 and Lys487. The segment covering 487-497 (KSLHHASHYHR) has biased composition (basic residues). Basic and acidic residues-rich tracts occupy residues 498–509 (LREERLLRESKR) and 517–527 (STEDGSHDDLF). Residue Lys530 forms a Glycyl lysine isopeptide (Lys-Gly) (interchain with G-Cter in SUMO2) linkage. A compositionally biased stretch (basic residues) spans 530 to 541 (KQKKKKPKPSGL).

Component of a nucleolar TRAMP-like complex, an ATP-dependent exosome regulatory complex consisting of a helicase (MTREX), an oligadenylate polymerase (TENT4B or TENT4A), and a substrate specific RNA-binding factor (ZCCHC7 or ZCCHC8). Several TRAMP-like complexes exist with specific compositions and are associated with nuclear, or nucleolar RNA exosomes.

Its subcellular location is the nucleus. The protein resides in the nucleolus. The sequence is that of Zinc finger CCHC domain-containing protein 7 (Zcchc7) from Mus musculus (Mouse).